We begin with the raw amino-acid sequence, 111 residues long: C-type lectin lectoxin-Enh1 (111 aa).

The N-terminal stretch at 1–23 (MGQFTVVSLGLLAMFLSLSGAKG) is a signal peptide. A disulfide bridge connects residues Cys26 and Cys37. The C-type lectin domain maps to 33 to 108 (RNGVCNKLFP…CASLHPFICQ (76 aa)). Residues 72-74 (EPN) carry the Mannose-binding motif. Residues Glu80, Asn95, and Asp96 each coordinate Ca(2+). A disulfide bridge links Cys82 with Cys99.

This sequence belongs to the true venom lectin family. Expressed by the venom gland.

It localises to the secreted. In terms of biological role, mannose-binding lectin which recognizes specific carbohydrate structures and agglutinates a variety of animal cells by binding to cell-surface glycoproteins and glycolipids. May be a calcium-dependent lectin. This Pseudoferania polylepis (Macleay's water snake) protein is C-type lectin lectoxin-Enh1.